A 290-amino-acid polypeptide reads, in one-letter code: Lipid phosphate phosphatase 2 (290 aa).

The next 3 membrane-spanning stretches (helical) occupy residues W26–H46, W69–I89, and V93–I113. A glycan (N-linked (GlcNAc...) asparagine) is linked at N142. The next 3 membrane-spanning stretches (helical) occupy residues S162–L182, G193–V213, and V226–P246.

It belongs to the PA-phosphatase related phosphoesterase family. In terms of tissue distribution, expressed in roots, stems, leaves, buds, flowers and siliques.

The protein resides in the membrane. With respect to regulation, PA phosphatase activity not inhibited by N-ethylmaleimide. Its function is as follows. May play a general 'housekeeping role' in lipid metabolism. Exhibits both diacylglycerol pyrophosphate (DGPP) phosphatase and phosphatidate (PA) phosphatase activities with no preference for either substrate. May play a role downstream of the ABA signaling pathway during seed germination and in stomatal movement in leaves. The sequence is that of Lipid phosphate phosphatase 2 (LPP2) from Arabidopsis thaliana (Mouse-ear cress).